A 189-amino-acid chain; its full sequence is Capsid protein (189 aa).

The protein belongs to the tymoviruses capsid protein family.

The protein resides in the virion. Self-assembles to form a T=3 icosahedral capsid composed of 180 copies of the capsid protein. The capsid encapsulates the single-stranded RNA genome. A pentameric unit may be lost during decapsidation. In Brassica, this protein is Capsid protein.